The primary structure comprises 213 residues: Uridine kinase (213 aa).

Residue 15-22 (GASASGKS) coordinates ATP.

It belongs to the uridine kinase family.

It localises to the cytoplasm. The catalysed reaction is uridine + ATP = UMP + ADP + H(+). It carries out the reaction cytidine + ATP = CMP + ADP + H(+). It participates in pyrimidine metabolism; CTP biosynthesis via salvage pathway; CTP from cytidine: step 1/3. The protein operates within pyrimidine metabolism; UMP biosynthesis via salvage pathway; UMP from uridine: step 1/1. In Yersinia pseudotuberculosis serotype O:1b (strain IP 31758), this protein is Uridine kinase.